A 443-amino-acid polypeptide reads, in one-letter code: Pentatricopeptide repeat-containing protein 6, mitochondrial (443 aa).

Residues 1-13 (MRILGSLPNNIRK) constitute a mitochondrion transit peptide. 2 PPR repeats span residues 130–164 (NIVDYTHILRVAMYTGNKHILEYIVARVKEKRIRP) and 220–254 (NSTTYDYLMVGLSRDGKIREIYDLIDTVWGINENS).

The protein resides in the mitochondrion. In terms of biological role, mitochondrial RNA-binding protein required for the stability of the atp9 mRNA. This is Pentatricopeptide repeat-containing protein 6, mitochondrial (ppr6) from Schizosaccharomyces pombe (strain 972 / ATCC 24843) (Fission yeast).